A 469-amino-acid chain; its full sequence is Ribulose bisphosphate carboxylase large chain (469 aa).

The residue at position 5 (Lys-5) is an N6,N6,N6-trimethyllysine. Substrate contacts are provided by Asn-114 and Thr-164. The Proton acceptor role is filled by Lys-166. Residue Lys-168 participates in substrate binding. The Mg(2+) site is built by Lys-192, Asp-194, and Glu-195. Position 192 is an N6-carboxylysine (Lys-192). Residue His-285 is the Proton acceptor of the active site. Residues Arg-286, His-318, and Ser-370 each coordinate substrate.

Belongs to the RuBisCO large chain family. Type I subfamily. Heterohexadecamer of 8 large chains and 8 small chains; disulfide-linked. The disulfide link is formed within the large subunit homodimers. Requires Mg(2+) as cofactor. Post-translationally, the disulfide bond which can form in the large chain dimeric partners within the hexadecamer appears to be associated with oxidative stress and protein turnover.

It is found in the plastid. Its subcellular location is the chloroplast. The catalysed reaction is 2 (2R)-3-phosphoglycerate + 2 H(+) = D-ribulose 1,5-bisphosphate + CO2 + H2O. It carries out the reaction D-ribulose 1,5-bisphosphate + O2 = 2-phosphoglycolate + (2R)-3-phosphoglycerate + 2 H(+). RuBisCO catalyzes two reactions: the carboxylation of D-ribulose 1,5-bisphosphate, the primary event in carbon dioxide fixation, as well as the oxidative fragmentation of the pentose substrate in the photorespiration process. Both reactions occur simultaneously and in competition at the same active site. The chain is Ribulose bisphosphate carboxylase large chain from Cephalanthus occidentalis (Common buttonbush).